A 105-amino-acid polypeptide reads, in one-letter code: Integration host factor subunit beta (105 aa).

The protein belongs to the bacterial histone-like protein family. As to quaternary structure, heterodimer of an alpha and a beta chain.

Its function is as follows. This protein is one of the two subunits of integration host factor, a specific DNA-binding protein that functions in genetic recombination as well as in transcriptional and translational control. This Bradyrhizobium sp. (strain ORS 278) protein is Integration host factor subunit beta.